Reading from the N-terminus, the 175-residue chain is Nicotinamide-nucleotide adenylyltransferase 1 (175 aa).

This sequence belongs to the archaeal NMN adenylyltransferase family.

The protein resides in the cytoplasm. It catalyses the reaction beta-nicotinamide D-ribonucleotide + ATP + H(+) = diphosphate + NAD(+). It participates in cofactor biosynthesis; NAD(+) biosynthesis; NAD(+) from nicotinamide D-ribonucleotide: step 1/1. This chain is Nicotinamide-nucleotide adenylyltransferase 1, found in Sulfolobus acidocaldarius (strain ATCC 33909 / DSM 639 / JCM 8929 / NBRC 15157 / NCIMB 11770).